A 200-amino-acid chain; its full sequence is Methylamine utilization protein MauD (200 aa).

The chain crosses the membrane as a helical span at residues 4-24 (FLIASNILLWLAFLGVTVVML). A Thioredoxin domain is found at 49-183 (PDIGDAAPEF…LESLLEADRT (135 aa)).

It localises to the membrane. It participates in one-carbon metabolism; methylamine degradation. Functionally, may be specifically involved in the processing, transport, and/or maturation of the MADH beta-subunit. The protein is Methylamine utilization protein MauD (mauD) of Paracoccus denitrificans.